A 551-amino-acid polypeptide reads, in one-letter code: Pyrroline-5-carboxylate reductase 1 (551 aa).

The interval 279–551 is disordered; that stretch reads LYTQKQQNKK…RHEVKTEQIN (273 aa). Composition is skewed to low complexity over residues 282–298, 306–342, 383–415, 424–441, 448–475, 487–496, and 503–520; these read QKQQ…QQHQ, QQHQ…YGHQ, QQYQ…SNQR, KSPQ…QPSS, QQQQ…QQQP, QQQQPQQQQQ, and YNNN…NNYN. Over residues 537–551 the composition is skewed to basic and acidic residues; the sequence is YHDEKRHEVKTEQIN.

Belongs to the pyrroline-5-carboxylate reductase family. In terms of assembly, homodecamer; composed of 5 homodimers.

The enzyme catalyses L-proline + NADP(+) = (S)-1-pyrroline-5-carboxylate + NADPH + 2 H(+). It catalyses the reaction L-proline + NAD(+) = (S)-1-pyrroline-5-carboxylate + NADH + 2 H(+). It participates in amino-acid biosynthesis; L-proline biosynthesis; L-proline from L-glutamate 5-semialdehyde: step 1/1. The chain is Pyrroline-5-carboxylate reductase 1 (pycr1) from Dictyostelium discoideum (Social amoeba).